We begin with the raw amino-acid sequence, 260 residues long: Indole-3-glycerol phosphate synthase (260 aa).

This sequence belongs to the TrpC family.

The catalysed reaction is 1-(2-carboxyphenylamino)-1-deoxy-D-ribulose 5-phosphate + H(+) = (1S,2R)-1-C-(indol-3-yl)glycerol 3-phosphate + CO2 + H2O. It functions in the pathway amino-acid biosynthesis; L-tryptophan biosynthesis; L-tryptophan from chorismate: step 4/5. The sequence is that of Indole-3-glycerol phosphate synthase from Thermoanaerobacter pseudethanolicus (strain ATCC 33223 / 39E) (Clostridium thermohydrosulfuricum).